We begin with the raw amino-acid sequence, 207 residues long: Phosphoribosylglycinamide formyltransferase (207 aa).

13–15 (GSN) is a N(1)-(5-phospho-beta-D-ribosyl)glycinamide binding site. Residues 100–103 (MHIL) and Asn-120 each bind (6R)-10-formyltetrahydrofolate. His-122 (proton donor) is an active-site residue. A (6R)-10-formyltetrahydrofolate-binding site is contributed by Asp-162. Residue Glu-191 coordinates N(1)-(5-phospho-beta-D-ribosyl)glycinamide.

Belongs to the GART family.

It carries out the reaction N(1)-(5-phospho-beta-D-ribosyl)glycinamide + (6R)-10-formyltetrahydrofolate = N(2)-formyl-N(1)-(5-phospho-beta-D-ribosyl)glycinamide + (6S)-5,6,7,8-tetrahydrofolate + H(+). It functions in the pathway purine metabolism; IMP biosynthesis via de novo pathway; N(2)-formyl-N(1)-(5-phospho-D-ribosyl)glycinamide from N(1)-(5-phospho-D-ribosyl)glycinamide (10-formyl THF route): step 1/1. In Schizosaccharomyces pombe (strain 972 / ATCC 24843) (Fission yeast), this protein is Phosphoribosylglycinamide formyltransferase (ade5).